A 1002-amino-acid polypeptide reads, in one-letter code: UPF0182 protein Mvan_1814 (1002 aa).

Helical transmembrane passes span 16-36 (VMIA…RLVD), 61-81 (LLLF…AMAL), 112-132 (LVGI…AQNY), 174-194 (FAAT…FGGI), 209-229 (IQLI…YWLD), 258-278 (KLIL…AIVL), and 286-306 (IGVV…PLVV). The disordered stretch occupies residues 891–958 (LFGPGADATA…TGPTQLSAGK (68 aa)). The span at 893–923 (GPGADATATGPAATEPPAGQAPQPQGNNQPP) shows a compositional bias: low complexity. Over residues 937–950 (PQQPEVPVAVPPTG) the composition is skewed to pro residues.

It belongs to the UPF0182 family.

It localises to the cell membrane. The sequence is that of UPF0182 protein Mvan_1814 from Mycolicibacterium vanbaalenii (strain DSM 7251 / JCM 13017 / BCRC 16820 / KCTC 9966 / NRRL B-24157 / PYR-1) (Mycobacterium vanbaalenii).